Reading from the N-terminus, the 209-residue chain is Protease (209 aa).

Residues histidine 60, aspartate 77, and cysteine 127 contribute to the active site.

Belongs to the peptidase C5 family. Interacts with protease cofactor pVI-C; this interaction is necessary for protease activation.

The protein localises to the virion. It is found in the host nucleus. It catalyses the reaction Cleaves proteins of the adenovirus and its host cell at two consensus sites: -Yaa-Xaa-Gly-Gly-|-Xaa- and -Yaa-Xaa-Gly-Xaa-|-Gly- (in which Yaa is Met, Ile or Leu, and Xaa is any amino acid).. With respect to regulation, requires DNA and protease cofactor for maximal activation. Inside nascent virions, becomes partially activated by binding to the viral DNA, allowing it to cleave the cofactor that binds to the protease and fully activates it. Actin, like the viral protease cofactor, seems to act as a cofactor in the cleavage of cytokeratin 18 and of actin itself. In terms of biological role, cleaves viral precursor proteins (pTP, pIIIa, pVI, pVII, pVIII, and pX) inside newly assembled particles giving rise to mature virions. Protease complexed to its cofactor slides along the viral DNA to specifically locate and cleave the viral precursors. Mature virions have a weakened organization compared to the unmature virions, thereby facilitating subsequent uncoating. Without maturation, the particle lacks infectivity and is unable to uncoat. Late in adenovirus infection, in the cytoplasm, may participate in the cytoskeleton destruction. Cleaves host cell cytoskeletal keratins K7 and K18. This chain is Protease, found in Homo sapiens (Human).